Reading from the N-terminus, the 488-residue chain is L-amino oxidase (488 aa).

FAD is bound by residues 60–61 (MS), 80–81 (EA), arginine 88, and 104–107 (GPMR). 2 residues coordinate substrate: arginine 107 and tyrosine 388. The cysteines at positions 347 and 428 are disulfide-linked. FAD-binding positions include glutamate 474 and 481–486 (GWIDST). 481 to 482 (GW) lines the substrate pocket.

It belongs to the flavin monoamine oxidase family. FIG1 subfamily. As to quaternary structure, monomer. This is in contrast with most of its orthologs, that are non-covalently linked homodimers. It depends on FAD as a cofactor. In terms of processing, N-glycosylated. Expressed by the venom gland.

It localises to the secreted. The catalysed reaction is an L-alpha-amino acid + O2 + H2O = a 2-oxocarboxylate + H2O2 + NH4(+). It carries out the reaction L-leucine + O2 + H2O = 4-methyl-2-oxopentanoate + H2O2 + NH4(+). Its function is as follows. Catalyzes an oxidative deamination of predominantly hydrophobic and aromatic L-amino acids, thus producing hydrogen peroxide that may contribute to the diverse toxic effects of this enzyme. Shows activity on L-Leu. Exhibits diverse biological activities, such as hemorrhage, hemolysis, edema, antibacterial and antiparasitic activities, as well as regulation of platelet aggregation. When tested on SW480 and SW620 human colon cancer cells, shows inhibition of cell proliferation, and induction of apoptosis, which is probably a consequence of the increased caspase-3 activity and the decreased Bcl-2 expression. The protein is L-amino oxidase of Trimeresurus purpureomaculatus (Mangrove pit viper).